A 4306-amino-acid polypeptide reads, in one-letter code: Cytoplasmic dynein 2 heavy chain 1 (4306 aa).

Residues Met-1–Gln-1650 form a stem region. An ATP-binding site is contributed by Leu-145 to Ser-152. Residues Lys-669–His-696 are a coiled coil. 4 AAA regions span residues Tyr-1651 to Gly-1875, Ser-1941 to Asp-2161, Leu-2249 to Gly-2505, and His-2617 to Lys-2862. Residues Gly-1689–Thr-1696, Gly-1979–Ser-1986, Gly-2291–Gly-2298, and Gly-2655–Arg-2662 each bind ATP. Residues Ala-2880 to Ile-3168 form a stalk region. Coiled coils occupy residues Leu-2896–Gln-2981, Leu-3108–Leu-3199, and Ile-3407–Glu-3441. AAA stretches follow at residues Leu-3243 to Asp-3472 and Met-3689 to Arg-3904.

Belongs to the dynein heavy chain family. As to quaternary structure, the cytoplasmic dynein complex 2 is probably composed by a heavy chain DYNC2H1 homodimer and a number of DYNC2LI1 light intermediate chains. As to expression, widely expressed both in ciliated and unciliated tissues. Detected in brain and testis (at protein level).

It is found in the cytoplasm. The protein resides in the cytoskeleton. The protein localises to the cilium axoneme. Its subcellular location is the cell membrane. May function as a motor for intraflagellar retrograde transport. Functions in cilia biogenesis. May play a role in transport between endoplasmic reticulum and Golgi or organization of the Golgi in cells. The sequence is that of Cytoplasmic dynein 2 heavy chain 1 (Dync2h1) from Rattus norvegicus (Rat).